The sequence spans 531 residues: MASSRQDYIAPWWTYWLHNFPHLNFNFQTVDNTFKPEDASYQQSLVFLACVSAVALGLCLLLLSVYLTCLCCCRREEDEEVKRPDTCCVTWAAVITGLVICSAVGVGFYGNSETNDGVYQLTYSIYNANHTLGGIGSMVGNSLGSMQVGLKEHLERLDEIFSPRGDYTQTLRFMQQMADNIIQQLTAMPETRKVQVDLAAIADRTAFIEYYRWLTYLLLLILDLVICLLACLALAKQSRWLLTVIMVCGMLTLIMSWASLGAGTATAVGTSDFCVSPDKYIVNQTKGTLSSDIVHYYLYCSQSLPNPFQQSLTIFQRSLTTMQIQVQGLLQFAVVVFPTAEKDLLGIQRLLNSSEFNLHQLTALLDCRSLHKDYLEALLGVCYDGVEGLLYLCLFSLLAACAFCALLCAVPRAWMLIAIRDRDYDDIDEEDPFNPTRRFNAYNPSRAQVHSFCSYSSSMGSQTSLQPPLQATSSTPEYMNQSMLFERNPRYENVPLIGSGSPPPSYSPSMRTTYLSMTDAQIRHFGTDFQV.

Residues 1–44 (MASSRQDYIAPWWTYWLHNFPHLNFNFQTVDNTFKPEDASYQQS) are Extracellular-facing. A helical membrane pass occupies residues 45–65 (LVFLACVSAVALGLCLLLLSV). The Cytoplasmic portion of the chain corresponds to 66-87 (YLTCLCCCRREEDEEVKRPDTC). Residues 88-108 (CVTWAAVITGLVICSAVGVGF) form a helical membrane-spanning segment. Residues 109 to 213 (YGNSETNDGV…RTAFIEYYRW (105 aa)) are Extracellular-facing. N-linked (GlcNAc...) asparagine glycosylation is present at Asn-129. Residues 214 to 234 (LTYLLLLILDLVICLLACLAL) form a helical membrane-spanning segment. At 235–239 (AKQSR) the chain is on the cytoplasmic side. A helical membrane pass occupies residues 240–260 (WLLTVIMVCGMLTLIMSWASL). At 261–389 (GAGTATAVGT…GVCYDGVEGL (129 aa)) the chain is on the extracellular side. Residues Asn-283 and Asn-352 are each glycosylated (N-linked (GlcNAc...) asparagine). The chain crosses the membrane as a helical span at residues 390-410 (LYLCLFSLLAACAFCALLCAV). The Cytoplasmic portion of the chain corresponds to 411 to 531 (PRAWMLIAIR…IRHFGTDFQV (121 aa)).

This sequence belongs to the tweety family.

It is found in the cell membrane. Probable large-conductance Ca(2+)-activated chloride channel. The polypeptide is Protein tweety homolog 2-like (ttyh2l) (Danio rerio (Zebrafish)).